Here is a 312-residue protein sequence, read N- to C-terminus: Olfactory receptor 2J1 (312 aa).

Residues 1-26 lie on the Extracellular side of the membrane; the sequence is MLMKKNASFEDFFLLLGFSNWPHLEV. Residue asparagine 6 is glycosylated (N-linked (GlcNAc...) asparagine). Residues 27–50 form a helical membrane-spanning segment; it reads VLFVVILIFYLITLIGNLFIIILS. Residues 51–58 are Cytoplasmic-facing; sequence YLDSHLHT. The helical transmembrane segment at 59–80 threads the bilayer; the sequence is PMYFFLSNLSFLDLCYTTSSIP. Residues 81–101 are Extracellular-facing; it reads QLLVNLWGPEKTISYAGCTVQ. A disulfide bridge connects residues cysteine 98 and cysteine 190. Residues 102–121 form a helical membrane-spanning segment; sequence LYFVLALGTAECVLLVVMSY. Topologically, residues 122–140 are cytoplasmic; the sequence is DRYAAVCRPLHYTVLMHPR. The helical transmembrane segment at 141-159 threads the bilayer; the sequence is FCRLLAAASWVSGFTTSAL. Residues 160–196 are Extracellular-facing; sequence HSSFTFWIPLCRHRLVDHFFCEVPALLRLSCVDTQAN. A helical transmembrane segment spans residues 197–220; sequence ELTLMVMSSIFVLIPLILILTSYG. Over 221 to 237 the chain is Cytoplasmic; the sequence is AIARAVLSMQSTTGLQK. The chain crosses the membrane as a helical span at residues 238–260; it reads VLRTCGAHLMVVSLFFIPVMCMY. The Extracellular portion of the chain corresponds to 261–273; it reads LQPPSENSQDQGK. A helical transmembrane segment spans residues 274-293; the sequence is FIALFYTVVTPSLNPLIYTF. Residues 294 to 312 are Cytoplasmic-facing; that stretch reads RNKDVRGAVKRLMGWEWGM.

It belongs to the G-protein coupled receptor 1 family.

It localises to the cell membrane. Odorant receptor. This chain is Olfactory receptor 2J1 (OR2J1), found in Homo sapiens (Human).